A 266-amino-acid polypeptide reads, in one-letter code: GTP cyclohydrolase III (266 aa).

Belongs to the archaeal-type GTP cyclohydrolase family.

It carries out the reaction GTP + 3 H2O = 2-amino-5-formylamino-6-(5-phospho-D-ribosylamino)pyrimidin-4(3H)-one + 2 phosphate + 2 H(+). Functionally, catalyzes the formation of 2-amino-5-formylamino-6-ribofuranosylamino-4(3H)-pyrimidinone ribonucleotide monophosphate and inorganic phosphate from GTP. Also has an independent pyrophosphate phosphohydrolase activity. This chain is GTP cyclohydrolase III, found in Methanococcus maripaludis (strain C7 / ATCC BAA-1331).